The sequence spans 640 residues: 1-deoxy-D-xylulose-5-phosphate synthase (640 aa).

Thiamine diphosphate-binding positions include His-78 and 119-121 (GHS). Asp-151 is a Mg(2+) binding site. Thiamine diphosphate is bound by residues 152–153 (GA), Asn-180, Tyr-289, and Glu-371. A Mg(2+)-binding site is contributed by Asn-180.

It belongs to the transketolase family. DXPS subfamily. In terms of assembly, homodimer. It depends on Mg(2+) as a cofactor. Thiamine diphosphate is required as a cofactor.

It carries out the reaction D-glyceraldehyde 3-phosphate + pyruvate + H(+) = 1-deoxy-D-xylulose 5-phosphate + CO2. It participates in metabolic intermediate biosynthesis; 1-deoxy-D-xylulose 5-phosphate biosynthesis; 1-deoxy-D-xylulose 5-phosphate from D-glyceraldehyde 3-phosphate and pyruvate: step 1/1. Its function is as follows. Catalyzes the acyloin condensation reaction between C atoms 2 and 3 of pyruvate and glyceraldehyde 3-phosphate to yield 1-deoxy-D-xylulose-5-phosphate (DXP). In Bartonella henselae (strain ATCC 49882 / DSM 28221 / CCUG 30454 / Houston 1) (Rochalimaea henselae), this protein is 1-deoxy-D-xylulose-5-phosphate synthase.